We begin with the raw amino-acid sequence, 367 residues long: Anthranilate phosphoribosyltransferase (367 aa).

Residues 1 to 21 (MALSSESSAASAARRPSGGPA) are compositionally biased toward low complexity. A disordered region spans residues 1–24 (MALSSESSAASAARRPSGGPATSW). Residues glycine 104, 107 to 108 (GD), threonine 112, 114 to 117 (NLST), 132 to 140 (KHGNRAASS), and glycine 144 contribute to the 5-phospho-alpha-D-ribose 1-diphosphate site. Position 104 (glycine 104) interacts with anthranilate. Serine 116 contacts Mg(2+). Asparagine 135 serves as a coordination point for anthranilate. Residue arginine 190 participates in anthranilate binding. Aspartate 248 and glutamate 249 together coordinate Mg(2+).

This sequence belongs to the anthranilate phosphoribosyltransferase family. In terms of assembly, homodimer. Mg(2+) is required as a cofactor.

It carries out the reaction N-(5-phospho-beta-D-ribosyl)anthranilate + diphosphate = 5-phospho-alpha-D-ribose 1-diphosphate + anthranilate. The protein operates within amino-acid biosynthesis; L-tryptophan biosynthesis; L-tryptophan from chorismate: step 2/5. Its function is as follows. Catalyzes the transfer of the phosphoribosyl group of 5-phosphorylribose-1-pyrophosphate (PRPP) to anthranilate to yield N-(5'-phosphoribosyl)-anthranilate (PRA). The sequence is that of Anthranilate phosphoribosyltransferase from Mycolicibacterium paratuberculosis (strain ATCC BAA-968 / K-10) (Mycobacterium paratuberculosis).